The following is a 364-amino-acid chain: Peptide chain release factor 1 (364 aa).

An N5-methylglutamine modification is found at Q238.

This sequence belongs to the prokaryotic/mitochondrial release factor family. Methylated by PrmC. Methylation increases the termination efficiency of RF1.

The protein resides in the cytoplasm. Its function is as follows. Peptide chain release factor 1 directs the termination of translation in response to the peptide chain termination codons UAG and UAA. This Psychrobacter sp. (strain PRwf-1) protein is Peptide chain release factor 1.